The primary structure comprises 445 residues: Ribosomal protein uS12 methylthiotransferase RimO (445 aa).

Positions 11 to 121 (PKISFVSLGC…VLDAVHRASP (111 aa)) constitute an MTTase N-terminal domain. 6 residues coordinate [4Fe-4S] cluster: C20, C56, C85, C152, C156, and C159. Residues 138–375 (LTPRHYAYLK…MARQQKISAR (238 aa)) form the Radical SAM core domain. In terms of domain architecture, TRAM spans 378-444 (KRKVGTRQQI…EYDLHGTVAG (67 aa)).

Belongs to the methylthiotransferase family. RimO subfamily. [4Fe-4S] cluster is required as a cofactor.

It is found in the cytoplasm. It catalyses the reaction L-aspartate(89)-[ribosomal protein uS12]-hydrogen + (sulfur carrier)-SH + AH2 + 2 S-adenosyl-L-methionine = 3-methylsulfanyl-L-aspartate(89)-[ribosomal protein uS12]-hydrogen + (sulfur carrier)-H + 5'-deoxyadenosine + L-methionine + A + S-adenosyl-L-homocysteine + 2 H(+). Its function is as follows. Catalyzes the methylthiolation of an aspartic acid residue of ribosomal protein uS12. This Bradyrhizobium sp. (strain ORS 278) protein is Ribosomal protein uS12 methylthiotransferase RimO.